We begin with the raw amino-acid sequence, 88 residues long: Large ribosomal subunit protein bL31B (88 aa).

Belongs to the bacterial ribosomal protein bL31 family. Type B subfamily. As to quaternary structure, part of the 50S ribosomal subunit.

The polypeptide is Large ribosomal subunit protein bL31B (Nocardia farcinica (strain IFM 10152)).